The sequence spans 176 residues: Ribosome maturation factor RimM (176 aa).

A PRC barrel domain is found at 99-176 (EDEYYWSDLV…RMVVDWERDF (78 aa)).

It belongs to the RimM family. As to quaternary structure, binds ribosomal protein uS19.

It localises to the cytoplasm. Functionally, an accessory protein needed during the final step in the assembly of 30S ribosomal subunit, possibly for assembly of the head region. Essential for efficient processing of 16S rRNA. May be needed both before and after RbfA during the maturation of 16S rRNA. It has affinity for free ribosomal 30S subunits but not for 70S ribosomes. This is Ribosome maturation factor RimM from Psychrobacter sp. (strain PRwf-1).